The following is a 270-amino-acid chain: Inositol monophosphatase (270 aa).

E71, D91, L93, and D94 together coordinate Mg(2+). E71 contributes to the substrate binding site. Residues 93-96 (LDGT), 194-196 (GSC), E213, and D221 contribute to the substrate site. Residue D221 coordinates Mg(2+).

This sequence belongs to the inositol monophosphatase superfamily. Mg(2+) is required as a cofactor.

The enzyme catalyses a myo-inositol phosphate + H2O = myo-inositol + phosphate. It participates in polyol metabolism; myo-inositol biosynthesis; myo-inositol from D-glucose 6-phosphate: step 2/2. Its activity is regulated as follows. Inhibited by Li(+). In terms of biological role, responsible for the provision of inositol required for synthesis of phosphatidylinositol and polyphosphoinositides. The protein is Inositol monophosphatase (IMP1) of Mesembryanthemum crystallinum (Common ice plant).